The sequence spans 505 residues: MDKENASVEKAPTTPSLAVPAPSQASPQSPQAALSPSNSSIQATFARARKGSHASQMERPNNRDFAIPASPTVGESSIAELVTAPPAVTPSRSRSSSAASNNQAAMSPVFPAYDDSNAKHYRRWEDDRLDLMVQPDKLVFVEGDTPVEKAFDKLVENHFTSLPVRTAPEHKSVSHSFDYADLNAYLLLVMGYVDAADTTPEALENVKKARSGQPVPVNFVAGLGAKDPFICVPRDSTLATAVEILGSGVHRFAVTEGPASDAVIGILSQRRTVRYIWENGRLFKTLEPLFQTPLTDLGLAQPNPNVLTIGGDEYVIAALRKMNAQNVSSLAVVDASNNLLGNISVVDVRLVSKSSQSHLLKATCAHFLSVILNARGLEDGKDSFPVFHVTPQTSYGRTIAKMVATNAHRLWVVQPDVPSPQPSTPSGQPASKTHGPSHHAAHNGKLIGVVSLTDILNVLGRHAGNSDLDPHFARRNRRRSSSSSVRSRSSYEQFRRSISIDRGQR.

Disordered regions lie at residues 1–70 (MDKE…IPAS) and 85–104 (PPAV…NNQA). The segment covering 15–40 (PSLAVPAPSQASPQSPQAALSPSNSS) has biased composition (low complexity). CBS domains are found at residues 132-195 (MVQP…YVDA), 225-282 (AKDP…NGRL), 302-360 (PNPN…SHLL), and 382-468 (DSFP…NSDL). Disordered regions lie at residues 414 to 441 (QPDV…HHAA) and 464 to 505 (GNSD…RGQR). The span at 481-490 (SSSSVRSRSS) shows a compositional bias: low complexity. Over residues 493-505 (QFRRSISIDRGQR) the composition is skewed to basic and acidic residues.

Belongs to the SDS23 family.

Its subcellular location is the cytoplasm. It is found in the nucleus. Functionally, involved in DNA replication and cell separation. In Yarrowia lipolytica (strain CLIB 122 / E 150) (Yeast), this protein is Protein SDS23 (SDS23).